We begin with the raw amino-acid sequence, 289 residues long: Diaminopimelate epimerase (289 aa).

Substrate contacts are provided by Asn-13, Gln-47, and Asn-67. The active-site Proton donor is the Cys-76. Residues 77–78, Asn-167, Asn-200, and 218–219 each bind substrate; these read GN and ER. Cys-227 (proton acceptor) is an active-site residue. A substrate-binding site is contributed by 228–229; the sequence is GT.

The protein belongs to the diaminopimelate epimerase family. As to quaternary structure, homodimer.

It is found in the cytoplasm. It carries out the reaction (2S,6S)-2,6-diaminopimelate = meso-2,6-diaminopimelate. Its pathway is amino-acid biosynthesis; L-lysine biosynthesis via DAP pathway; DL-2,6-diaminopimelate from LL-2,6-diaminopimelate: step 1/1. Its function is as follows. Catalyzes the stereoinversion of LL-2,6-diaminopimelate (L,L-DAP) to meso-diaminopimelate (meso-DAP), a precursor of L-lysine and an essential component of the bacterial peptidoglycan. The protein is Diaminopimelate epimerase of Burkholderia thailandensis (strain ATCC 700388 / DSM 13276 / CCUG 48851 / CIP 106301 / E264).